Consider the following 142-residue polypeptide: Large ribosomal subunit protein uL13 (142 aa).

It belongs to the universal ribosomal protein uL13 family. Part of the 50S ribosomal subunit.

In terms of biological role, this protein is one of the early assembly proteins of the 50S ribosomal subunit, although it is not seen to bind rRNA by itself. It is important during the early stages of 50S assembly. The polypeptide is Large ribosomal subunit protein uL13 (Methylococcus capsulatus (strain ATCC 33009 / NCIMB 11132 / Bath)).